The following is a 510-amino-acid chain: Probable cytosol aminopeptidase (510 aa).

Mn(2+) contacts are provided by lysine 254 and aspartate 259. Lysine 266 is an active-site residue. Mn(2+)-binding residues include aspartate 277, aspartate 336, and glutamate 338. The active site involves arginine 340. The disordered stretch occupies residues 487-510; it reads AQPVKASPKTRPARKSTPAAKTRA.

It belongs to the peptidase M17 family. The cofactor is Mn(2+).

The protein localises to the cytoplasm. It carries out the reaction Release of an N-terminal amino acid, Xaa-|-Yaa-, in which Xaa is preferably Leu, but may be other amino acids including Pro although not Arg or Lys, and Yaa may be Pro. Amino acid amides and methyl esters are also readily hydrolyzed, but rates on arylamides are exceedingly low.. The enzyme catalyses Release of an N-terminal amino acid, preferentially leucine, but not glutamic or aspartic acids.. Its function is as follows. Presumably involved in the processing and regular turnover of intracellular proteins. Catalyzes the removal of unsubstituted N-terminal amino acids from various peptides. The chain is Probable cytosol aminopeptidase from Polaromonas naphthalenivorans (strain CJ2).